Reading from the N-terminus, the 1229-residue chain is DNA-directed RNA polymerase subunit beta (1229 aa).

It belongs to the RNA polymerase beta chain family. The RNAP catalytic core consists of 2 alpha, 1 beta, 1 beta' and 1 omega subunit. When a sigma factor is associated with the core the holoenzyme is formed, which can initiate transcription.

It carries out the reaction RNA(n) + a ribonucleoside 5'-triphosphate = RNA(n+1) + diphosphate. Its function is as follows. DNA-dependent RNA polymerase catalyzes the transcription of DNA into RNA using the four ribonucleoside triphosphates as substrates. The chain is DNA-directed RNA polymerase subunit beta from Roseiflexus sp. (strain RS-1).